A 2355-amino-acid chain; its full sequence is Acetyl-CoA carboxylase 2 (2355 aa).

The region spanning 138 to 645 (PIHSILVATN…HTGWLDSRIA (508 aa)) is the Biotin carboxylation domain. Positions 291–485 (GRSLVTVPEE…AAQVAVGMGI (195 aa)) constitute an ATP-grasp domain. 317 to 374 (CQVVGYPAMIKASWGGGGKGIRKVHNDDEVRALFKQVQGEVPGSPIFIMKVASQSRHL) contributes to the ATP binding site. Glu440, Glu454, and Asn456 together coordinate Mg(2+). Positions 440, 454, and 456 each coordinate Mn(2+). The active site involves Arg458. Residues 772-846 (LQNDHDPSKL…QAGELIAKLD (75 aa)) enclose the Biotinyl-binding domain. Lys813 is modified (N6-biotinyllysine). At Thr1133 the chain carries Phosphothreonine. Position 1293 is a phosphoserine (Ser1293). The CoA carboxyltransferase N-terminal domain maps to 1593 to 1932 (QYKPLNNLDR…YVGGPLPVLA (340 aa)). A carboxyltransferase region spans residues 1593 to 2251 (QYKPLNNLDR…ESSLVRNIRK (659 aa)). CoA contacts are provided by Arg1841, Lys2142, and Arg2144. The region spanning 1936–2251 (PPERTVEYIP…ESSLVRNIRK (316 aa)) is the CoA carboxyltransferase C-terminal domain.

Homodimer. Requires biotin as cofactor. Mg(2+) is required as a cofactor. Mn(2+) serves as cofactor. As to expression, widely expressed at low levels.

Its subcellular location is the cytoplasm. It is found in the cytosol. The enzyme catalyses hydrogencarbonate + acetyl-CoA + ATP = malonyl-CoA + ADP + phosphate + H(+). It catalyses the reaction N(6)-biotinyl-L-lysyl-[protein] + hydrogencarbonate + ATP = N(6)-carboxybiotinyl-L-lysyl-[protein] + ADP + phosphate + H(+). The protein operates within lipid metabolism; malonyl-CoA biosynthesis; malonyl-CoA from acetyl-CoA: step 1/1. Its function is as follows. Multifunctional enzyme that catalyzes the carboxylation of acetyl-CoA, forming malonyl-CoA, which is used in the plastid for fatty acid synthesis and in the cytosol in various biosynthetic pathways including fatty acid elongation. This is Acetyl-CoA carboxylase 2 (ACC2) from Arabidopsis thaliana (Mouse-ear cress).